Consider the following 200-residue polypeptide: Late protein I196L (200 aa).

Repeat copies occupy residues 28 to 48 (SNSL…PTTS) and 49 to 69 (SNSL…PTTS). One copy of the 3; approximate repeat lies at 70–91 (SNYLTSAISTNISDKEEDTPFS).

Belongs to the asfivirus I196L family.

The polypeptide is Late protein I196L (African swine fever virus (isolate Tick/South Africa/Pretoriuskop Pr4/1996) (ASFV)).